Reading from the N-terminus, the 359-residue chain is 3-dehydroquinate synthase (359 aa).

NAD(+) contacts are provided by residues 72–77, 106–110, 130–131, lysine 143, lysine 152, and 170–173; these read EGEIHK, GVIGD, TS, and CLKT. Residues glutamate 185, histidine 248, and histidine 264 each contribute to the Zn(2+) site.

The protein belongs to the sugar phosphate cyclases superfamily. Dehydroquinate synthase family. Co(2+) serves as cofactor. It depends on Zn(2+) as a cofactor. NAD(+) is required as a cofactor.

It is found in the cytoplasm. It carries out the reaction 7-phospho-2-dehydro-3-deoxy-D-arabino-heptonate = 3-dehydroquinate + phosphate. It participates in metabolic intermediate biosynthesis; chorismate biosynthesis; chorismate from D-erythrose 4-phosphate and phosphoenolpyruvate: step 2/7. Functionally, catalyzes the conversion of 3-deoxy-D-arabino-heptulosonate 7-phosphate (DAHP) to dehydroquinate (DHQ). This is 3-dehydroquinate synthase from Dehalococcoides mccartyi (strain ATCC BAA-2100 / JCM 16839 / KCTC 5957 / BAV1).